Here is a 327-residue protein sequence, read N- to C-terminus: Porphobilinogen deaminase (327 aa).

The residue at position 250 (C250) is an S-(dipyrrolylmethanemethyl)cysteine.

Belongs to the HMBS family. In terms of assembly, monomer. Dipyrromethane serves as cofactor.

It catalyses the reaction 4 porphobilinogen + H2O = hydroxymethylbilane + 4 NH4(+). Its pathway is porphyrin-containing compound metabolism; protoporphyrin-IX biosynthesis; coproporphyrinogen-III from 5-aminolevulinate: step 2/4. Tetrapolymerization of the monopyrrole PBG into the hydroxymethylbilane pre-uroporphyrinogen in several discrete steps. The sequence is that of Porphobilinogen deaminase from Paraburkholderia phymatum (strain DSM 17167 / CIP 108236 / LMG 21445 / STM815) (Burkholderia phymatum).